We begin with the raw amino-acid sequence, 99 residues long: Defensin-like protein 2 (99 aa).

The first 30 residues, 1–30 (MAMAKKSVSSFTLIFILVLVIFEVPEIKAQ), serve as a signal peptide directing secretion. 4 cysteine pairs are disulfide-bonded: C34-C86, C47-C71, C56-C81, and C60-C83. Positions 94–99 (ILRGGI) are excised as a propeptide.

The protein belongs to the DEFL family. Protease inhibitor I18 (RTI/MTI-2) subfamily.

The protein localises to the secreted. In terms of biological role, inhibits bovine beta-trypsin and alpha-chymotrypsin on a 1:1 molar basis. The chain is Defensin-like protein 2 from Sinapis alba (White mustard).